Consider the following 316-residue polypeptide: Probable cell division protein WhiA (316 aa).

Residues 274-308 constitute a DNA-binding region (H-T-H motif); it reads SLKELGEMVSTGVISKSGVNHRLRKIDEIAEKLRN.

This sequence belongs to the WhiA family.

In terms of biological role, involved in cell division and chromosome segregation. This is Probable cell division protein WhiA from Macrococcus caseolyticus (strain JCSC5402) (Macrococcoides caseolyticum).